The chain runs to 141 residues: Large ribosomal subunit protein uL11 (141 aa).

Belongs to the universal ribosomal protein uL11 family. As to quaternary structure, part of the ribosomal stalk of the 50S ribosomal subunit. Interacts with L10 and the large rRNA to form the base of the stalk. L10 forms an elongated spine to which L12 dimers bind in a sequential fashion forming a multimeric L10(L12)X complex. Post-translationally, one or more lysine residues are methylated.

Forms part of the ribosomal stalk which helps the ribosome interact with GTP-bound translation factors. The chain is Large ribosomal subunit protein uL11 from Limosilactobacillus fermentum (strain NBRC 3956 / LMG 18251) (Lactobacillus fermentum).